The chain runs to 336 residues: Vacuolar protein sorting-associated protein 26B (336 aa).

Residues S302, S304, and S319 each carry the phosphoserine modification.

It belongs to the VPS26 family. Component of the heterotrimeric retromer cargo-selective complex (CSC), also described as vacuolar protein sorting subcomplex (VPS), formed by VPS26 (VPS26A or VPS26B), VPS29 and VPS35. The CSC has a highly elongated structure with VPS26 and VPS29 binding independently at opposite distal ends of VPS35 as central platform. The CSC is believed to associate with variable sorting nexins to form functionally distinct retromer complex variants. The originally described SNX-BAR retromer is a pentamer containing the CSC and a heterodimeric membrane-deforming subcomplex formed between SNX1 or SNX2 and SNX5 or SNX6 (also called SNX-BAR subcomplex); the respective CSC and SNX-BAR subcomplexes associate with low affinity. The CSC associates with SNX3 to form a SNX3-retromer complex. The CSC associates with SNX27, the WASH complex and the SNX-BAR subcomplex to form the SNX27-retromer complex. Interacts with VPS29, VPS35, TBC1D5, GOLPH3, SNX27.

It localises to the cytoplasm. The protein localises to the membrane. The protein resides in the early endosome. It is found in the late endosome. Acts as a component of the retromer cargo-selective complex (CSC). The CSC is believed to be the core functional component of retromer or respective retromer complex variants acting to prevent missorting of selected transmembrane cargo proteins into the lysosomal degradation pathway. The recruitment of the CSC to the endosomal membrane involves RAB7A and SNX3. The SNX-BAR retromer mediates retrograde transport of cargo proteins from endosomes to the trans-Golgi network (TGN) and is involved in endosome-to-plasma membrane transport for cargo protein recycling. The SNX3-retromer mediates the retrograde transport of WLS distinct from the SNX-BAR retromer pathway. The SNX27-retromer is believed to be involved in endosome-to-plasma membrane trafficking and recycling of a broad spectrum of cargo proteins. The CSC seems to act as recruitment hub for other proteins, such as the WASH complex and TBC1D5. May be involved in retrograde transport of SORT1 but not of IGF2R. Acts redundantly with VSP26A in SNX-27 mediated endocytic recycling of SLC2A1/GLUT1. This chain is Vacuolar protein sorting-associated protein 26B (VPS26B), found in Pongo abelii (Sumatran orangutan).